We begin with the raw amino-acid sequence, 163 residues long: Cyanate hydratase (163 aa).

Residues arginine 103, glutamate 106, and serine 129 contribute to the active site.

This sequence belongs to the cyanase family.

It catalyses the reaction cyanate + hydrogencarbonate + 3 H(+) = NH4(+) + 2 CO2. Its function is as follows. Catalyzes the reaction of cyanate with bicarbonate to produce ammonia and carbon dioxide. This chain is Cyanate hydratase, found in Paracoccidioides lutzii (strain ATCC MYA-826 / Pb01) (Paracoccidioides brasiliensis).